A 909-amino-acid polypeptide reads, in one-letter code: WD repeat-containing protein 20 homolog (909 aa).

A disordered region spans residues 58–132; that stretch reads SPAQGKLGSD…SAGNNTVEAR (75 aa). 2 stretches are compositionally biased toward low complexity: residues 80 to 107 and 115 to 127; these read GANT…AISN and SHSN…AGNN. WD repeat units lie at residues 248–288, 321–362, 363–402, and 470–517; these read IDKT…AATA, TDNC…GIAR, SYFG…VVAR, and ADRN…LRHP. Disordered stretches follow at residues 458–483, 554–628, 661–699, 720–739, and 749–775; these read FEGF…FRSD, SGQA…AGSV, SDSI…NSGS, SEKK…RQHR, and NQHN…GHSS. 2 stretches are compositionally biased toward polar residues: residues 555–569 and 595–606; these read GQAT…SCSP and TANCTISSQSSP. Composition is skewed to low complexity over residues 612–628 and 673–699; these read EAAT…AGSV and GQRP…NSGS. Residues 856-893 form a WD 5 repeat; it reads IAHERLTALIFREDCFLTACQDGFIYTWARPGHATHAT.

As to quaternary structure, component of the Usp12-46 deubiquitylase complex consisting of Usp12-46, Wdr20 and Uaf1; regulatory subunit that, together with Uaf1, stabilizes Usp12-46. The Usp12-46 deubiquitylase complex associates with arr/arrow; the interaction leads to deubiquitination and stabilization of arr/arrow.

Its function is as follows. Regulatory component of the Usp12-46 deubiquitylase complex. This complex deubiquitylates the wg/wingless-signaling receptor arr/arrow, which stabilizes the receptor and increases its concentration at the cell surface; this enhances the sensitivity of cells to wg/wingless-signal stimulation. This increases the amplitude and spatial range of the signaling response to the wg/wingless morphogen gradient, facilitating the precise concentration-dependent regulation of its target genes. Required for wg/wingless-mediated signaling in the wing imaginal disc and for wg/wingless-dependent regulation of intestinal stem cell proliferation. This chain is WD repeat-containing protein 20 homolog, found in Drosophila melanogaster (Fruit fly).